The sequence spans 286 residues: Shikimate dehydrogenase (NADP(+)) (286 aa).

Residues 19-21 and Thr-66 each bind shikimate; that span reads SVS. Lys-70 functions as the Proton acceptor in the catalytic mechanism. Residues Asn-91 and Asp-106 each coordinate shikimate. Residues 130–134 and Ala-225 contribute to the NADP(+) site; that span reads GAGGS. Tyr-227 contributes to the shikimate binding site. Gly-248 contributes to the NADP(+) binding site.

It belongs to the shikimate dehydrogenase family. Homodimer.

It catalyses the reaction shikimate + NADP(+) = 3-dehydroshikimate + NADPH + H(+). It functions in the pathway metabolic intermediate biosynthesis; chorismate biosynthesis; chorismate from D-erythrose 4-phosphate and phosphoenolpyruvate: step 4/7. Its function is as follows. Involved in the biosynthesis of the chorismate, which leads to the biosynthesis of aromatic amino acids. Catalyzes the reversible NADPH linked reduction of 3-dehydroshikimate (DHSA) to yield shikimate (SA). The sequence is that of Shikimate dehydrogenase (NADP(+)) from Dehalococcoides mccartyi (strain ATCC BAA-2266 / KCTC 15142 / 195) (Dehalococcoides ethenogenes (strain 195)).